The primary structure comprises 123 residues: Large ribosomal subunit protein uL29 (123 aa).

At K19 the chain carries N6-acetyllysine. Residue K25 forms a Glycyl lysine isopeptide (Lys-Gly) (interchain with G-Cter in SUMO2) linkage. A Phosphoserine modification is found at S29. Position 43 is an N6-acetyllysine (K43). A disordered region spans residues 95–114 (LNKHEENLKTKKQQRKERLY).

Belongs to the universal ribosomal protein uL29 family. In terms of assembly, component of the large ribosomal subunit.

The protein resides in the cytoplasm. In terms of biological role, component of the large ribosomal subunit. The ribosome is a large ribonucleoprotein complex responsible for the synthesis of proteins in the cell. The polypeptide is Large ribosomal subunit protein uL29 (RPL35) (Bos taurus (Bovine)).